The sequence spans 83 residues: Kunitz-type serine protease inhibitor homolog beta-bungarotoxin B6 chain (83 aa).

The N-terminal stretch at 1 to 24 (MSSGGLLLLLGLLRVCAELTPVSS) is a signal peptide. One can recognise a BPTI/Kunitz inhibitor domain in the interval 29–79 (CNLPPDPGPCHDNKFAFYHHPASNKCKEFVYGGCGGNDNRFKTRNKCQCTC). 3 cysteine pairs are disulfide-bonded: cysteine 29/cysteine 79, cysteine 38/cysteine 62, and cysteine 54/cysteine 75.

It belongs to the venom Kunitz-type family. In terms of assembly, heterodimer; disulfide-linked. The A chains have phospholipase A2 activity and the B chains show homology with the basic protease inhibitors. Expressed by the venom gland.

It is found in the secreted. Functionally, beta-bungarotoxins are presynaptic neurotoxins of the venom. The B chain is homologous to venom basic protease inhibitors but has no protease inhibitor activity and blocks voltage-gated potassium channels (Kv). This Bungarus multicinctus (Many-banded krait) protein is Kunitz-type serine protease inhibitor homolog beta-bungarotoxin B6 chain.